Reading from the N-terminus, the 406-residue chain is Paracaspase (406 aa).

The segment at 193 to 374 is caspase-like; the sequence is IGNSKYSQHR…TERKNNNIST (182 aa). Active-site residues include His-266 and Cys-311.

Belongs to the peptidase C14B family.

Not required for DIF-induced autophagic cell death and necrotic cell death. In Dictyostelium discoideum (Social amoeba), this protein is Paracaspase (pcp).